We begin with the raw amino-acid sequence, 343 residues long: MKVSIIGATGYGGLELIRLLHQHASVDIATLHSFSAQSETLATFYPHLKDLEASPLEKINPTEIIEKSDTVFIATPSGIAKDIALPYVDAGLNVIDLSGDFRLKDRQLYEKWYGKSAAPTEYIAKAEYGLAEFREKKETTFIANPGCYATATLLGLAPLTKNKLIDPTSIIVDAKSGISGAGKVPSASTHFTETNENMTLYKMNSHQHIPEIMQQLTKWDESIPAIQFSTSLIPITRGIFTTIYVKPKNPITQKELHTLYESTYENAPFVRIQPENVYPTVKQVTASNYCDIGLAYNEKTNVITIVSVIDNLVKGAAGQAIQNLNIMANFAESDGLRFIPVYP.

C147 is a catalytic residue.

The protein belongs to the NAGSA dehydrogenase family. Type 1 subfamily.

The protein resides in the cytoplasm. It carries out the reaction N-acetyl-L-glutamate 5-semialdehyde + phosphate + NADP(+) = N-acetyl-L-glutamyl 5-phosphate + NADPH + H(+). Its pathway is amino-acid biosynthesis; L-arginine biosynthesis; N(2)-acetyl-L-ornithine from L-glutamate: step 3/4. Catalyzes the NADPH-dependent reduction of N-acetyl-5-glutamyl phosphate to yield N-acetyl-L-glutamate 5-semialdehyde. This chain is N-acetyl-gamma-glutamyl-phosphate reductase, found in Listeria monocytogenes serotype 4a (strain HCC23).